We begin with the raw amino-acid sequence, 852 residues long: Zinc finger and SCAN domain-containing protein 29 (852 aa).

In terms of domain architecture, SCAN box spans 18–100 (RQRFRRFHYQ…TLVEDLEREP (83 aa)). Disordered regions lie at residues 96-182 (LERE…PKSG), 347-400 (ASHS…SAAP), and 502-557 (PNDG…RAPV). K112 is covalently cross-linked (Glycyl lysine isopeptide (Lys-Gly) (interchain with G-Cter in SUMO2)). Phosphoserine is present on S153. K180 is covalently cross-linked (Glycyl lysine isopeptide (Lys-Gly) (interchain with G-Cter in SUMO2)). A compositionally biased stretch (polar residues) spans 508–517 (ETASCPVQGT). Acidic residues predominate over residues 528-545 (EADEATEEDSDDDEEDTE). S561 is subject to Phosphoserine. A Glycyl lysine isopeptide (Lys-Gly) (interchain with G-Cter in SUMO2) cross-link involves residue K576. A disordered region spans residues 603 to 625 (QGKGNESDCRSGRQWAKTSGEKR). K652 is covalently cross-linked (Glycyl lysine isopeptide (Lys-Gly) (interchain with G-Cter in SUMO2)). 6 C2H2-type zinc fingers span residues 678–700 (YKCA…RRIH), 706–728 (YKCL…RRIH), 734–756 (YQCG…QRTH), 762–784 (YQCE…RRIH), 790–812 (HVCP…HRTH), and 818–840 (YGCH…GEIH).

This sequence belongs to the krueppel C2H2-type zinc-finger protein family.

It is found in the nucleus. May be involved in transcriptional regulation. The protein is Zinc finger and SCAN domain-containing protein 29 (ZSCAN29) of Homo sapiens (Human).